Reading from the N-terminus, the 157-residue chain is Protein Smg (157 aa).

The protein belongs to the Smg family.

The sequence is that of Protein Smg from Serratia proteamaculans (strain 568).